The chain runs to 707 residues: Ribosomal RNA large subunit methyltransferase K/L (707 aa).

A THUMP domain is found at 44–155 (VIYNLCLWSR…NDILTVSFDL (112 aa)).

Belongs to the methyltransferase superfamily. RlmKL family.

It localises to the cytoplasm. The catalysed reaction is guanosine(2445) in 23S rRNA + S-adenosyl-L-methionine = N(2)-methylguanosine(2445) in 23S rRNA + S-adenosyl-L-homocysteine + H(+). It catalyses the reaction guanosine(2069) in 23S rRNA + S-adenosyl-L-methionine = N(2)-methylguanosine(2069) in 23S rRNA + S-adenosyl-L-homocysteine + H(+). In terms of biological role, specifically methylates the guanine in position 2445 (m2G2445) and the guanine in position 2069 (m7G2069) of 23S rRNA. The sequence is that of Ribosomal RNA large subunit methyltransferase K/L from Legionella pneumophila subsp. pneumophila (strain Philadelphia 1 / ATCC 33152 / DSM 7513).